We begin with the raw amino-acid sequence, 1368 residues long: DNA-directed RNA polymerase subunit beta (1368 aa).

Belongs to the RNA polymerase beta chain family. The RNAP catalytic core consists of 2 alpha, 1 beta, 1 beta' and 1 omega subunit. When a sigma factor is associated with the core the holoenzyme is formed, which can initiate transcription.

It carries out the reaction RNA(n) + a ribonucleoside 5'-triphosphate = RNA(n+1) + diphosphate. In terms of biological role, DNA-dependent RNA polymerase catalyzes the transcription of DNA into RNA using the four ribonucleoside triphosphates as substrates. In Legionella pneumophila (strain Corby), this protein is DNA-directed RNA polymerase subunit beta.